Consider the following 505-residue polypeptide: ATP synthase subunit alpha (505 aa).

169–176 (GDRKTGKT) is a binding site for ATP.

Belongs to the ATPase alpha/beta chains family. As to quaternary structure, F-type ATPases have 2 components, CF(1) - the catalytic core - and CF(0) - the membrane proton channel. CF(1) has five subunits: alpha(3), beta(3), gamma(1), delta(1), epsilon(1). CF(0) has three main subunits: a(1), b(2) and c(9-12). The alpha and beta chains form an alternating ring which encloses part of the gamma chain. CF(1) is attached to CF(0) by a central stalk formed by the gamma and epsilon chains, while a peripheral stalk is formed by the delta and b chains.

The protein resides in the cell membrane. It catalyses the reaction ATP + H2O + 4 H(+)(in) = ADP + phosphate + 5 H(+)(out). In terms of biological role, produces ATP from ADP in the presence of a proton gradient across the membrane. The alpha chain is a regulatory subunit. The chain is ATP synthase subunit alpha from Pediococcus pentosaceus (strain ATCC 25745 / CCUG 21536 / LMG 10740 / 183-1w).